We begin with the raw amino-acid sequence, 188 residues long: Acireductone dioxygenase (188 aa).

Positions 97, 99, 103, and 141 each coordinate Fe(2+). Residues His97, His99, Glu103, and His141 each coordinate Ni(2+).

It belongs to the acireductone dioxygenase (ARD) family. As to quaternary structure, monomer. It depends on Fe(2+) as a cofactor. Ni(2+) is required as a cofactor.

The catalysed reaction is 1,2-dihydroxy-5-(methylsulfanyl)pent-1-en-3-one + O2 = 3-(methylsulfanyl)propanoate + CO + formate + 2 H(+). It catalyses the reaction 1,2-dihydroxy-5-(methylsulfanyl)pent-1-en-3-one + O2 = 4-methylsulfanyl-2-oxobutanoate + formate + 2 H(+). The protein operates within amino-acid biosynthesis; L-methionine biosynthesis via salvage pathway; L-methionine from S-methyl-5-thio-alpha-D-ribose 1-phosphate: step 5/6. Its function is as follows. Catalyzes 2 different reactions between oxygen and the acireductone 1,2-dihydroxy-3-keto-5-methylthiopentene (DHK-MTPene) depending upon the metal bound in the active site. Fe-containing acireductone dioxygenase (Fe-ARD) produces formate and 2-keto-4-methylthiobutyrate (KMTB), the alpha-ketoacid precursor of methionine in the methionine recycle pathway. Ni-containing acireductone dioxygenase (Ni-ARD) produces methylthiopropionate, carbon monoxide and formate, and does not lie on the methionine recycle pathway. This is Acireductone dioxygenase from Xylella fastidiosa (strain M12).